The chain runs to 236 residues: 1-(5-phosphoribosyl)-5-[(5-phosphoribosylamino)methylideneamino] imidazole-4-carboxamide isomerase (236 aa).

The Proton acceptor role is filled by Asp-8. The Proton donor role is filled by Asp-127.

It belongs to the HisA/HisF family.

It is found in the cytoplasm. It catalyses the reaction 1-(5-phospho-beta-D-ribosyl)-5-[(5-phospho-beta-D-ribosylamino)methylideneamino]imidazole-4-carboxamide = 5-[(5-phospho-1-deoxy-D-ribulos-1-ylimino)methylamino]-1-(5-phospho-beta-D-ribosyl)imidazole-4-carboxamide. It functions in the pathway amino-acid biosynthesis; L-histidine biosynthesis; L-histidine from 5-phospho-alpha-D-ribose 1-diphosphate: step 4/9. This is 1-(5-phosphoribosyl)-5-[(5-phosphoribosylamino)methylideneamino] imidazole-4-carboxamide isomerase from Campylobacter fetus subsp. fetus (strain 82-40).